The primary structure comprises 401 residues: UPF0242 protein CPn_0755/CP_1117/CPj0755/CpB0783 (401 aa).

Belongs to the UPF0242 family.

The sequence is that of UPF0242 protein CPn_0755/CP_1117/CPj0755/CpB0783 from Chlamydia pneumoniae (Chlamydophila pneumoniae).